The primary structure comprises 508 residues: Photosystem II CP47 reaction center protein (508 aa).

6 helical membrane-spanning segments follow: residues 21-36 (SVHIMHTALVSGWAGS), 101-115 (IVFSGLCFLAAIWHW), 140-156 (GIHLFLSGVACFGFGAF), 203-218 (IAAGTLGILAGLFHLS), 237-252 (VLSSSIAAVFFAAFVV), and 457-472 (SFALLFFFGHIWHGSR).

The protein belongs to the PsbB/PsbC family. PsbB subfamily. In terms of assembly, PSII is composed of 1 copy each of membrane proteins PsbA, PsbB, PsbC, PsbD, PsbE, PsbF, PsbH, PsbI, PsbJ, PsbK, PsbL, PsbM, PsbT, PsbX, PsbY, PsbZ, Psb30/Ycf12, at least 3 peripheral proteins of the oxygen-evolving complex and a large number of cofactors. It forms dimeric complexes. It depends on Binds multiple chlorophylls. PSII binds additional chlorophylls, carotenoids and specific lipids. as a cofactor.

The protein resides in the plastid. The protein localises to the chloroplast thylakoid membrane. One of the components of the core complex of photosystem II (PSII). It binds chlorophyll and helps catalyze the primary light-induced photochemical processes of PSII. PSII is a light-driven water:plastoquinone oxidoreductase, using light energy to abstract electrons from H(2)O, generating O(2) and a proton gradient subsequently used for ATP formation. This Lobularia maritima (Sweet alyssum) protein is Photosystem II CP47 reaction center protein.